The chain runs to 230 residues: E3 ubiquitin-protein ligase RNF114 (230 aa).

The segment at 31–70 adopts an RING-type zinc-finger fold; the sequence is CPVCLEVYEKPVQVPCGHVFCSACLQECLKPKKPVCGVCR. Residues cysteine 93 and cysteine 96 each coordinate Zn(2+). Residues 93–112 form a C2HC RNF-type zinc finger; sequence CHGCRKNFFLSKIRAHVATC. At lysine 104 the chain carries N6-acetyllysine. 2 residues coordinate Zn(2+): histidine 108 and cysteine 112. Lysine 114 bears the N6-acetyllysine mark.

As to quaternary structure, interacts with XAF1, the interaction increases XAF1 stability and proapoptotic effects, and may regulate IFN signaling. In terms of processing, autoubiquitinated. Polyubiquitinated in the presence of E2 enzymes UBE2D1, UBE2D2 and UBE2D3, but only monoubiquitinated in the presence of UBE2E1.

Its subcellular location is the cytoplasm. It localises to the nucleus. It carries out the reaction S-ubiquitinyl-[E2 ubiquitin-conjugating enzyme]-L-cysteine + [acceptor protein]-L-lysine = [E2 ubiquitin-conjugating enzyme]-L-cysteine + N(6)-ubiquitinyl-[acceptor protein]-L-lysine.. The protein operates within protein modification; protein ubiquitination. E3 ubiquitin-protein ligase that promotes the ubiquitination of various substrates. In turn, participates in the regulation of many biological processes including cell cycle, apoptosis, osteoclastogenesis as well as innate or adaptive immunity. Acts as negative regulator of NF-kappa-B-dependent transcription by promoting the ubiquitination and stabilization of the NF-kappa-B inhibitor TNFAIP3. May promote the ubiquitination of TRAF6 as well. Also acts as a negative regulator of T-cell activation. Inhibits cellular dsRNA responses and interferon production by targeting MAVS component for proteasomal degradation. Ubiquitinates the CDK inhibitor CDKN1A leading to its degradationand probably also CDKN1B and CDKN1C. This activity stimulates cell cycle G1-to-S phase transition and suppresses cellular senescence. May play a role in spermatogenesis. The polypeptide is E3 ubiquitin-protein ligase RNF114 (RNF114) (Bos taurus (Bovine)).